The chain runs to 421 residues: Testin (421 aa).

Residues 92–199 enclose the PET domain; that stretch reads MILTNPVAAK…GDVKLPREMD (108 aa). Residues 133-164 form a disordered region; it reads EKQPVAGSEGAQYRKKQLAKQLPAHDQDPSKC. Residues 155-164 are compositionally biased toward basic and acidic residues; it reads PAHDQDPSKC. LIM zinc-binding domains are found at residues 234–297, 299–359, and 362–421; these read YSCY…CDSE, PRCA…NHAV, and QGCH…KMMS.

This sequence belongs to the prickle / espinas / testin family. Interacts via LIM domain 1 with ZYX. Interacts (via LIM domain 3) with ENAH and VASP. Interacts with ALKBH4, talin, actin, alpha-actinin, GRIP1 and PXN. Interacts (via LIM domain 2) with ACTL7A (via N-terminus). Heterodimer with ACTL7A; the heterodimer interacts with ENAH to form a heterotrimer.

It is found in the cytoplasm. The protein localises to the cell junction. The protein resides in the focal adhesion. Its function is as follows. Scaffold protein that may play a role in cell adhesion, cell spreading and in the reorganization of the actin cytoskeleton. Plays a role in the regulation of cell proliferation. May act as a tumor suppressor. In Mustela putorius furo (European domestic ferret), this protein is Testin (TES).